We begin with the raw amino-acid sequence, 320 residues long: Ferrochelatase (320 aa).

Residues histidine 194 and glutamate 275 each coordinate Fe cation.

Belongs to the ferrochelatase family. As to quaternary structure, monomer.

It is found in the cytoplasm. It carries out the reaction heme b + 2 H(+) = protoporphyrin IX + Fe(2+). Its pathway is porphyrin-containing compound metabolism; protoheme biosynthesis; protoheme from protoporphyrin-IX: step 1/1. In terms of biological role, catalyzes the ferrous insertion into protoporphyrin IX. The sequence is that of Ferrochelatase from Escherichia coli O8 (strain IAI1).